The following is a 466-amino-acid chain: MSQKPFRVIIVGGSVTGLTLAHSLHRIGVDYIILEKRAKVVVQEGASIGILPNGARVLDQLGLYNTIEQSAAPPESSHIHFPDGFHFISPYPKRMFESFGYPIAFLERRRLLEILYDTLPDKTKLKVNKTVSDIEQYPEGGKYNARVRTIDGDVYEGDLVVGADGVHSRTRREMWRLSGSSPTGDVPVSERNSTSVEYCCVFGISQGLSGLRVGQQVMRIYNGRTLLVVPSKDELVFWFLSQKLDRKYEYSNAPRFTLEDAAAQCLQVADAPIADGIQFQDIWKTRQAFNMVSLEENLFKTWSFGPIVCIGDSMHKMTINFGQGANCAIEDVAVLSNLINELLLENKGMKPTFRDIEVLLRRFNRMHLSRVSDIFNMSWLVARVHAQDGLLRKIIGRYVMPYLGGRFDSRPFRMIADAAALDFLPLPRSSFPGWKMYKSREGGVVRNVFFLLAATVIVAWVCRLWA.

The first 23 residues, 1 to 23 (MSQKPFRVIIVGGSVTGLTLAHS), serve as a signal peptide directing secretion. Residues glutamate 35, glycine 49, and arginine 108 each contribute to the FAD site. N-linked (GlcNAc...) asparagine glycans are attached at residues asparagine 128 and asparagine 192. FAD is bound by residues aspartate 312 and alanine 325. A glycan (N-linked (GlcNAc...) asparagine) is linked at asparagine 376. The helical transmembrane segment at 443-465 (GVVRNVFFLLAATVIVAWVCRLW) threads the bilayer.

Belongs to the paxM FAD-dependent monooxygenase family. The cofactor is FAD.

It is found in the membrane. Its pathway is secondary metabolite biosynthesis; terpenoid biosynthesis. FAD-dependent monooxygenase; part of the gene cluster that mediates the biosynthesis of diterpenoid pyrones. The first step of the pathway is the synthesis of the alpha-pyrone moiety by the polyketide synthase dpfgA via condensation of one acetyl-CoA starter unit with 3 malonyl-CoA units and 2 methylations. The alpha-pyrone is then combined with geranylgeranyl pyrophosphate (GGPP) formed by the GGPP synthase dpfgD through the action of the prenyltransferase dpfgC to yield a linear alpha-pyrone diterpenoid. Subsequent steps in the diterpenoid pyrone biosynthetic pathway involve the decalin core formation, which is initiated by the epoxidation of the C10-C11 olefin by the FAD-dependent oxidoreductase dpfgE, and is followed by a cyclization cascade catalyzed by the terpene cyclase dpfgB. The short chain dehydrogenase/reductase dpfgG then oxidizes the 8S hydroxy group to a ketone and the short chain dehydrogenase/reductase dpfgH reduces the ketone to the 8R hydroxy group to yield higginsianin B. Higginsianin B is further methylated by the methyltransferase dpfgI to produce the intermediate named FDDP B. The cytochrome P450 monooxygenase dfgpJ then catalyzes a three-step oxidation at C-27 to generate a carboxylic acid as well as C-26 hydroxylation. Finally, methyltransferase dpfgK methylates the carboxylic acid generated by dpfgJ, yielding the final diterpenoid pyrones from the pathway which were named FDDP D and FDDP E. This is FAD-dependent monooxygenase dpfgE from Gibberella zeae (strain ATCC MYA-4620 / CBS 123657 / FGSC 9075 / NRRL 31084 / PH-1) (Wheat head blight fungus).